We begin with the raw amino-acid sequence, 83 residues long: MIYKAVFVCLVLVLLGDVFCSPRNSGGGTLNDNPFEKRTDCRFVGAKCTKANNPCVGKVCNGYQLYCPADDDHCIMKLTFIPG.

An N-terminal signal peptide occupies residues 1 to 20 (MIYKAVFVCLVLVLLGDVFC). A propeptide spanning residues 21–36 (SPRNSGGGTLNDNPFE) is cleaved from the precursor. A Proline amide modification is found at Pro82.

Contains 3 disulfide bonds. Expressed by acrorhagi.

It localises to the secreted. The protein resides in the nematocyst. Toxin. The chain is U-actitoxin-Aeq6a from Actinia equina (Beadlet anemone).